A 611-amino-acid polypeptide reads, in one-letter code: Oxidoreductase cicC (611 aa).

Positions 1-20 (MALRYLNKFSLLSLAVPTLA) are cleaved as a signal peptide. FAD contacts are provided by residues 45-46 (NA) and 65-66 (EA). N-linked (GlcNAc...) asparagine glycosylation is found at Asn-76 and Asn-113. FAD is bound by residues Val-123 and 131 to 134 (NLMT). 3 N-linked (GlcNAc...) asparagine glycosylation sites follow: Asn-282, Asn-410, and Asn-475. The active-site Proton acceptor is His-547. His-547 serves as the catalytic Proton donor. Residue Ala-581 participates in FAD binding. The active-site Proton acceptor is His-591. An FAD-binding site is contributed by 592–593 (PI).

Belongs to the GMC oxidoreductase family. FAD serves as cofactor.

It participates in phytotoxin biosynthesis. Functionally, oxidoreductase; part of the gene cluster that mediates the biosynthesis of cichorine, a phytotoxin active against knapweed, corn, and soybeans. The first step in the pathway is performed by the non-reducing polyketide synthase pkbA that condenses one acetyl-CoA starter unit with 3 malonyl-CoA units. PkbA also catalyzes one methylation step to produce 3-methylorsellinate. The nonribosomal peptide synthase-like protein cicB, the cytochrome P450 monooxygenase cicH and the O-methyltransferase cicE are involved in the conversion of 3-methylorsellinate into nidulol. CicB converts 3-methylorsellinate to a yet unidentified intermediate, cicH may play a ring-closing role for cichorine and cicE is plausibly responsible for the methylation of one of the phenol groups. The oxidoreductase cicC acts downstream with still unidentified enzymes to further convert nidulol into cichorine. The protein is Oxidoreductase cicC of Emericella nidulans (strain FGSC A4 / ATCC 38163 / CBS 112.46 / NRRL 194 / M139) (Aspergillus nidulans).